Consider the following 156-residue polypeptide: Large ribosomal subunit protein uL23 (156 aa).

The span at 1–19 (MAPKAKKEAPAPPKAEAKA) shows a compositional bias: basic and acidic residues. The segment at 1–67 (MAPKAKKEAP…PKYPRKSAPR (67 aa)) is disordered. At A2 the chain carries N,N,N-trimethylalanine. Residue K14 forms a Glycyl lysine isopeptide (Lys-Gly) (interchain with G-Cter in SUMO2) linkage. Positions 20 to 67 (KALKAKKAVLKGVHSHKKKKIRTSPTFRRPKTLRLRRQPKYPRKSAPR) are enriched in basic residues. The segment at 32–74 (VHSHKKKKIRTSPTFRRPKTLRLRRQPKYPRKSAPRRNKLDHY) is beta-like import receptor binding (BIB) domain. R41 carries the citrulline modification. S43 carries the phosphoserine modification. T45 carries the post-translational modification Phosphothreonine. At K70 the chain carries N6-acetyllysine.

It belongs to the universal ribosomal protein uL23 family. In terms of assembly, component of the large ribosomal subunit. Interacts with LYAR and GNL2. Interacts with MDM2; this interaction may promote MDM2-mediated p53/TP53 polyubiquitination. Directly interacts (via BIB domain) with IPO5, IPO7, KPNB1 and TNPO1; these interactions are involved in RPL23A nuclear import for the assembly of ribosomal subunits. Interacts with IPO8. In terms of processing, N-terminus is methylated by METTL11A/NTM1. Citrullinated by PADI4.

Its subcellular location is the cytoplasm. The protein resides in the nucleus. Component of the large ribosomal subunit. The ribosome is a large ribonucleoprotein complex responsible for the synthesis of proteins in the cell. Binds a specific region on the 26S rRNA. May promote p53/TP53 degradation possibly through the stimulation of MDM2-mediated TP53 polyubiquitination. This is Large ribosomal subunit protein uL23 (RPL23A) from Bos taurus (Bovine).